A 61-amino-acid chain; its full sequence is Photosystem II reaction center protein K (61 aa).

Positions 1–24 are excised as a propeptide; sequence MLNTFSLIGICLNSTLFSSSFFFG. A helical membrane pass occupies residues 36 to 56; the sequence is IVDIMPVIPLFFFLLAFVWQA.

It belongs to the PsbK family. As to quaternary structure, PSII is composed of 1 copy each of membrane proteins PsbA, PsbB, PsbC, PsbD, PsbE, PsbF, PsbH, PsbI, PsbJ, PsbK, PsbL, PsbM, PsbT, PsbX, PsbY, PsbZ, Psb30/Ycf12, at least 3 peripheral proteins of the oxygen-evolving complex and a large number of cofactors. It forms dimeric complexes.

Its subcellular location is the plastid. The protein resides in the chloroplast thylakoid membrane. One of the components of the core complex of photosystem II (PSII). PSII is a light-driven water:plastoquinone oxidoreductase that uses light energy to abstract electrons from H(2)O, generating O(2) and a proton gradient subsequently used for ATP formation. It consists of a core antenna complex that captures photons, and an electron transfer chain that converts photonic excitation into a charge separation. This Nicotiana tomentosiformis (Tobacco) protein is Photosystem II reaction center protein K.